An 86-amino-acid polypeptide reads, in one-letter code: Small ribosomal subunit protein bS20 (86 aa).

This sequence belongs to the bacterial ribosomal protein bS20 family.

Functionally, binds directly to 16S ribosomal RNA. The chain is Small ribosomal subunit protein bS20 from Pelagibacter ubique (strain HTCC1062).